Reading from the N-terminus, the 370-residue chain is Chaperone protein DnaJ (370 aa).

In terms of domain architecture, J spans 4 to 68 (DYYQVLGVSK…QKRAAYDRFG (65 aa)). The CR-type zinc finger occupies 133 to 211 (GIEKNISFSS…CHGMGRYHKQ (79 aa)). Residues Cys-146, Cys-149, Cys-163, Cys-166, Cys-185, Cys-188, Cys-199, and Cys-202 each contribute to the Zn(2+) site. CXXCXGXG motif repeat units follow at residues 146-153 (CDACHGTG), 163-170 (CDSCGGVG), 185-192 (CHKCQGNG), and 199-206 (CKKCHGMG).

Belongs to the DnaJ family. As to quaternary structure, homodimer. Requires Zn(2+) as cofactor.

It is found in the cytoplasm. Functionally, participates actively in the response to hyperosmotic and heat shock by preventing the aggregation of stress-denatured proteins and by disaggregating proteins, also in an autonomous, DnaK-independent fashion. Unfolded proteins bind initially to DnaJ; upon interaction with the DnaJ-bound protein, DnaK hydrolyzes its bound ATP, resulting in the formation of a stable complex. GrpE releases ADP from DnaK; ATP binding to DnaK triggers the release of the substrate protein, thus completing the reaction cycle. Several rounds of ATP-dependent interactions between DnaJ, DnaK and GrpE are required for fully efficient folding. Also involved, together with DnaK and GrpE, in the DNA replication of plasmids through activation of initiation proteins. This chain is Chaperone protein DnaJ, found in Rickettsia typhi (strain ATCC VR-144 / Wilmington).